A 372-amino-acid polypeptide reads, in one-letter code: THAP domain-containing protein 5 (372 aa).

The THAP-type zinc-finger motif lies at 1-85 (MTRYCAATRC…LKPNAIPTLF (85 aa)). Residues 306 to 362 (TDRHYLRQKIAKLQSKIAVLEAQENATLSRLRLLESVIAKLKQENLLSDEKLKILEN) are a coiled coil.

The protein resides in the nucleus. The protein is THAP domain-containing protein 5 (thap5) of Xenopus laevis (African clawed frog).